The sequence spans 591 residues: Vomeromodulin (591 aa).

The signal sequence occupies residues 1–18; sequence MWVLQALAIMLSIQAGTL. The tract at residues 151 to 172 is disordered; the sequence is NEGNGDSSKPSSGSKATGGLGQ. Residues Asn-421 and Asn-516 are each glycosylated (N-linked (GlcNAc...) asparagine).

Post-translationally, N-glycosylated. The N-glycans consist mainly of complex sialylated and fucosylated biantennary structures. Expressed in lung. Not detected in other tissues tested (at protein level).

Its subcellular location is the secreted. This chain is Vomeromodulin, found in Mus musculus (Mouse).